The chain runs to 221 residues: Epididymal secretory glutathione peroxidase (221 aa).

An N-terminal signal peptide occupies residues 1-21; the sequence is MVTELRVFYLVPLLLASYVQT. Residue C73 is part of the active site.

The protein belongs to the glutathione peroxidase family. Epididymis.

It localises to the secreted. The catalysed reaction is 2 glutathione + H2O2 = glutathione disulfide + 2 H2O. Its function is as follows. Protects cells and enzymes from oxidative damage, by catalyzing the reduction of hydrogen peroxide, lipid peroxides and organic hydroperoxide, by glutathione. May constitute a glutathione peroxidase-like protective system against peroxide damage in sperm membrane lipids. The protein is Epididymal secretory glutathione peroxidase (Gpx5) of Mus musculus (Mouse).